Here is a 253-residue protein sequence, read N- to C-terminus: Large ribosomal subunit protein mL57 (253 aa).

The N-terminal 28 residues, 1–28, are a transit peptide targeting the mitochondrion; sequence MENSMMFISRSLRRPVTALNCNLQSVRT.

Belongs to the ribonuclease III family. Mitochondrion-specific ribosomal protein mL57 subfamily. Component of the mitochondrial large ribosomal subunit (mt-LSU). Mature yeast 74S mitochondrial ribosomes consist of a small (37S) and a large (54S) subunit. The 37S small subunit contains a 15S ribosomal RNA (15S mt-rRNA) and 34 different proteins. The 54S large subunit contains a 21S rRNA (21S mt-rRNA) and 46 different proteins. mL57 forms a heterodimer with mL44 and stabilizes rRNA expansion segments 1/2 at a membrane-facing protuberance close to the point of attachment of the ribosome to the translocon in the membrane.

The protein localises to the mitochondrion. Component of the mitochondrial ribosome (mitoribosome), a dedicated translation machinery responsible for the synthesis of mitochondrial genome-encoded proteins, including at least some of the essential transmembrane subunits of the mitochondrial respiratory chain. The mitoribosomes are attached to the mitochondrial inner membrane and translation products are cotranslationally integrated into the membrane. The protein is Large ribosomal subunit protein mL57 (MRPL15) of Saccharomyces cerevisiae (strain ATCC 204508 / S288c) (Baker's yeast).